A 128-amino-acid polypeptide reads, in one-letter code: Ribosome-binding factor A (128 aa).

It belongs to the RbfA family. Monomer. Binds 30S ribosomal subunits, but not 50S ribosomal subunits or 70S ribosomes.

The protein resides in the cytoplasm. Functionally, one of several proteins that assist in the late maturation steps of the functional core of the 30S ribosomal subunit. Associates with free 30S ribosomal subunits (but not with 30S subunits that are part of 70S ribosomes or polysomes). Required for efficient processing of 16S rRNA. May interact with the 5'-terminal helix region of 16S rRNA. This is Ribosome-binding factor A from Microcystis aeruginosa (strain NIES-843 / IAM M-2473).